The following is a 227-amino-acid chain: MKKLTVTFLTFISIFFAATAAFAENRPILNTINYQQQVEKWVTTDSADVMVSVNVTTKEKKFDALQHQVMKKLEELSDGRQWHIDSFSMSQDQSGLEVLSWEVRSRMPLALVNSLRQKIDSLSQAGQQYKIQNVDFEPSLVEKEKAFAELRQRVYDQVKVELDNLNKSFPNGHYFLHSIDFVSPPLYAANQKELTLMRSAPSEKTAVTLGRNLMLIANVKVATFLNK.

The signal sequence occupies residues 1–23 (MKKLTVTFLTFISIFFAATAAFA).

This is an uncharacterized protein from Coxiella burnetii (strain RSA 493 / Nine Mile phase I).